Consider the following 174-residue polypeptide: UPF0664 stress-induced protein C29B12.11c (174 aa).

The disordered stretch occupies residues 147 to 174; the sequence is HLDPLPPYHRPSSSQDQPPHYEEAVNKS. Over residues 165–174 the composition is skewed to basic and acidic residues; that stretch reads PHYEEAVNKS.

The protein belongs to the UPF0664 family.

The protein resides in the cytoplasm. It localises to the nucleus. The polypeptide is UPF0664 stress-induced protein C29B12.11c (Schizosaccharomyces pombe (strain 972 / ATCC 24843) (Fission yeast)).